A 507-amino-acid polypeptide reads, in one-letter code: Glycogen synthase (507 aa).

Lysine 15 contacts ADP-alpha-D-glucose.

This sequence belongs to the glycosyltransferase 1 family. Bacterial/plant glycogen synthase subfamily.

It carries out the reaction [(1-&gt;4)-alpha-D-glucosyl](n) + ADP-alpha-D-glucose = [(1-&gt;4)-alpha-D-glucosyl](n+1) + ADP + H(+). The protein operates within glycan biosynthesis; glycogen biosynthesis. Its function is as follows. Synthesizes alpha-1,4-glucan chains using ADP-glucose. The sequence is that of Glycogen synthase from Rhodopirellula baltica (strain DSM 10527 / NCIMB 13988 / SH1).